The chain runs to 266 residues: Putative pyruvate, phosphate dikinase regulatory protein (266 aa).

149–156 (GVSRTSKT) lines the ADP pocket.

The protein belongs to the pyruvate, phosphate/water dikinase regulatory protein family. PDRP subfamily.

It catalyses the reaction N(tele)-phospho-L-histidyl/L-threonyl-[pyruvate, phosphate dikinase] + ADP = N(tele)-phospho-L-histidyl/O-phospho-L-threonyl-[pyruvate, phosphate dikinase] + AMP + H(+). The enzyme catalyses N(tele)-phospho-L-histidyl/O-phospho-L-threonyl-[pyruvate, phosphate dikinase] + phosphate + H(+) = N(tele)-phospho-L-histidyl/L-threonyl-[pyruvate, phosphate dikinase] + diphosphate. Its function is as follows. Bifunctional serine/threonine kinase and phosphorylase involved in the regulation of the pyruvate, phosphate dikinase (PPDK) by catalyzing its phosphorylation/dephosphorylation. In Geobacillus kaustophilus (strain HTA426), this protein is Putative pyruvate, phosphate dikinase regulatory protein.